The primary structure comprises 125 residues: Small ribosomal subunit protein uS13 (125 aa).

The protein belongs to the universal ribosomal protein uS13 family. In terms of assembly, part of the 30S ribosomal subunit. Forms a loose heterodimer with protein S19. Forms two bridges to the 50S subunit in the 70S ribosome.

In terms of biological role, located at the top of the head of the 30S subunit, it contacts several helices of the 16S rRNA. In the 70S ribosome it contacts the 23S rRNA (bridge B1a) and protein L5 of the 50S subunit (bridge B1b), connecting the 2 subunits; these bridges are implicated in subunit movement. Contacts the tRNAs in the A and P-sites. The protein is Small ribosomal subunit protein uS13 of Gluconacetobacter diazotrophicus (strain ATCC 49037 / DSM 5601 / CCUG 37298 / CIP 103539 / LMG 7603 / PAl5).